The primary structure comprises 417 residues: NADH-quinone oxidoreductase subunit D (417 aa).

This sequence belongs to the complex I 49 kDa subunit family. NDH-1 is composed of 14 different subunits. Subunits NuoB, C, D, E, F, and G constitute the peripheral sector of the complex.

Its subcellular location is the cell inner membrane. The enzyme catalyses a quinone + NADH + 5 H(+)(in) = a quinol + NAD(+) + 4 H(+)(out). Functionally, NDH-1 shuttles electrons from NADH, via FMN and iron-sulfur (Fe-S) centers, to quinones in the respiratory chain. The immediate electron acceptor for the enzyme in this species is believed to be ubiquinone. Couples the redox reaction to proton translocation (for every two electrons transferred, four hydrogen ions are translocated across the cytoplasmic membrane), and thus conserves the redox energy in a proton gradient. The protein is NADH-quinone oxidoreductase subunit D of Albidiferax ferrireducens (strain ATCC BAA-621 / DSM 15236 / T118) (Rhodoferax ferrireducens).